Here is a 1024-residue protein sequence, read N- to C-terminus: Translation initiation factor IF-2 (1024 aa).

A disordered region spans residues 33–425 (SHMSSLEDDT…GRVKKTKTMK (393 aa)). 4 stretches are compositionally biased toward basic and acidic residues: residues 43–62 (EARV…DTRV), 135–148 (TPED…ELKP), 167–198 (TPAK…KETS), and 223–263 (SKPD…KEVR). Residues 316-325 (EATQAPTSPQ) show a composition bias toward polar residues. A compositionally biased stretch (basic and acidic residues) spans 332–350 (KPADKGPARAQAHRPDTGR). Residues 365–375 (RSKKKEWKKKG) are compositionally biased toward basic residues. Residues 394–406 (SVVEGKDLYEKGR) show a composition bias toward basic and acidic residues. A compositionally biased stretch (basic residues) spans 407–423 (SGKKGRRKDGRVKKTKT). The tr-type G domain maps to 518-687 (SRPPVVTIMG…LLQSEVLELK (170 aa)). A G1 region spans residues 527–534 (GHVDHGKT). 527–534 (GHVDHGKT) provides a ligand contact to GTP. Positions 552 to 556 (GITQH) are G2. Residues 573 to 576 (DTPG) are G3. GTP is bound by residues 573-577 (DTPGH) and 627-630 (NKMD). The tract at residues 627–630 (NKMD) is G4. Residues 663 to 665 (SAK) form a G5 region.

This sequence belongs to the TRAFAC class translation factor GTPase superfamily. Classic translation factor GTPase family. IF-2 subfamily.

It is found in the cytoplasm. In terms of biological role, one of the essential components for the initiation of protein synthesis. Protects formylmethionyl-tRNA from spontaneous hydrolysis and promotes its binding to the 30S ribosomal subunits. Also involved in the hydrolysis of GTP during the formation of the 70S ribosomal complex. This is Translation initiation factor IF-2 from Desulforapulum autotrophicum (strain ATCC 43914 / DSM 3382 / VKM B-1955 / HRM2) (Desulfobacterium autotrophicum).